The following is a 292-amino-acid chain: Protoheme IX farnesyltransferase (292 aa).

9 helical membrane-spanning segments follow: residues 13–33, 35–55, 84–104, 106–126, 135–155, 161–181, 206–226, 231–251, and 263–283; these read ILFGNFITTLGGFFLAAQGHV, FLLLILTLLGTTFVVASGCVV, TALIFAFILGIIGFGILWFWV, PYSFSFAIIGFVVYVGFYSLW, TIIGSISGASPPVIGYTAVTH, ALLIFLAYGLWQMPHSWAIAI, VECLIYIVLFAAVLNGLYCFG, FFLLTFNVLTAYWLYLSIIGF, and LFLFSVILITLLSLSFSFTYQ.

The protein belongs to the UbiA prenyltransferase family. Protoheme IX farnesyltransferase subfamily.

The protein localises to the cell inner membrane. The enzyme catalyses heme b + (2E,6E)-farnesyl diphosphate + H2O = Fe(II)-heme o + diphosphate. It functions in the pathway porphyrin-containing compound metabolism; heme O biosynthesis; heme O from protoheme: step 1/1. Its function is as follows. Converts heme B (protoheme IX) to heme O by substitution of the vinyl group on carbon 2 of heme B porphyrin ring with a hydroxyethyl farnesyl side group. The protein is Protoheme IX farnesyltransferase of Acinetobacter baylyi (strain ATCC 33305 / BD413 / ADP1).